A 205-amino-acid polypeptide reads, in one-letter code: 3-demethoxyubiquinol 3-hydroxylase (205 aa).

The Fe cation site is built by E54, E84, H87, E136, E168, and H171.

Belongs to the COQ7 family. It depends on Fe cation as a cofactor.

It is found in the cell membrane. It carries out the reaction a 5-methoxy-2-methyl-3-(all-trans-polyprenyl)benzene-1,4-diol + AH2 + O2 = a 3-demethylubiquinol + A + H2O. The protein operates within cofactor biosynthesis; ubiquinone biosynthesis. In terms of biological role, catalyzes the hydroxylation of 2-nonaprenyl-3-methyl-6-methoxy-1,4-benzoquinol during ubiquinone biosynthesis. This Paracidovorax citrulli (strain AAC00-1) (Acidovorax citrulli) protein is 3-demethoxyubiquinol 3-hydroxylase.